Consider the following 495-residue polypeptide: UPF0371 protein cgR_2887 (495 aa).

The protein belongs to the UPF0371 family.

In Corynebacterium glutamicum (strain R), this protein is UPF0371 protein cgR_2887.